A 231-amino-acid chain; its full sequence is Two-component response regulator ORR1 (231 aa).

The Response regulatory domain maps to 9–135; that stretch reads RVLLVDDSPV…DVQRLRKCSP (127 aa). A 4-aspartylphosphate modification is found at D68.

The protein belongs to the ARR family. Type-A subfamily. Post-translationally, two-component system major event consists of a His-to-Asp phosphorelay between a sensor histidine kinase (HK) and a response regulator (RR). In plants, the His-to-Asp phosphorelay involves an additional intermediate named Histidine-containing phosphotransfer protein (HPt). This multistep phosphorelay consists of a His-Asp-His-Asp sequential transfer of a phosphate group between first a His and an Asp of the HK protein, followed by the transfer to a conserved His of the HPt protein and finally the transfer to an Asp in the receiver domain of the RR protein. As to expression, expressed in mature leaves and flowers, and at low levels in roots and shoots.

Its function is as follows. Functions as a response regulator involved in His-to-Asp phosphorelay signal transduction system. Phosphorylation of the Asp residue in the receiver domain activates the ability of the protein to promote the transcription of target genes. Type-A response regulators seem to act as negative regulators of the cytokinin signaling. The chain is Two-component response regulator ORR1 from Oryza sativa subsp. indica (Rice).